The primary structure comprises 376 residues: UDP-N-acetylglucosamine 2-epimerase (376 aa).

Residues arginine 10, lysine 15, aspartate 95, glutamate 117, histidine 213, glutamine 271, phenylalanine 276, 290-292 (SGG), glutamate 296, and arginine 313 each bind substrate.

It belongs to the UDP-N-acetylglucosamine 2-epimerase family. As to quaternary structure, homodimer.

The protein resides in the cytoplasm. It catalyses the reaction UDP-N-acetyl-alpha-D-glucosamine = UDP-N-acetyl-alpha-D-mannosamine. Its pathway is bacterial outer membrane biogenesis; enterobacterial common antigen biosynthesis. With respect to regulation, allosterically activated by its substrate, UDP-GlcNAc. Its function is as follows. Catalyzes the reversible epimerization at C-2 of UDP-N-acetylglucosamine (UDP-GlcNAc) and thereby provides bacteria with UDP-N-acetylmannosamine (UDP-ManNAc), the activated donor of ManNAc residues. Also involved in bacteriophage N4 adsorption. The protein is UDP-N-acetylglucosamine 2-epimerase of Escherichia coli (strain K12).